The chain runs to 141 residues: Hemoglobin subunit alpha (141 aa).

Residues 1-22 (VLSEDDKNRVRTSVGKNPELPG) form a disordered region. Residues 1–141 (VLSEDDKNRV…VSEVLESKYR (141 aa)) form the Globin domain. An O2-binding site is contributed by His58. His87 is a heme b binding site.

This sequence belongs to the globin family. As to quaternary structure, heterotetramer of two alpha chains and two beta chains. As to expression, red blood cells.

In terms of biological role, involved in oxygen transport from the lung to the various peripheral tissues. This chain is Hemoglobin subunit alpha (HBA), found in Vipera aspis (Aspic viper).